The chain runs to 496 residues: Glycerol kinase (496 aa).

ADP is bound at residue threonine 12. ATP contacts are provided by threonine 12, threonine 13, and serine 14. Threonine 12 contacts sn-glycerol 3-phosphate. ADP is bound at residue arginine 16. Sn-glycerol 3-phosphate contacts are provided by arginine 82, glutamate 83, and tyrosine 134. Positions 82, 83, and 134 each coordinate glycerol. Histidine 230 carries the phosphohistidine; by HPr modification. Aspartate 244 contributes to the sn-glycerol 3-phosphate binding site. Positions 244 and 245 each coordinate glycerol. 2 residues coordinate ADP: threonine 266 and glycine 309. The ATP site is built by threonine 266, glycine 309, glutamine 313, and glycine 410. 2 residues coordinate ADP: glycine 410 and asparagine 414.

This sequence belongs to the FGGY kinase family. In terms of assembly, homotetramer and homodimer (in equilibrium). Post-translationally, the phosphoenolpyruvate-dependent sugar phosphotransferase system (PTS), including enzyme I, and histidine-containing protein (HPr) are required for the phosphorylation, which leads to the activation of the enzyme.

The catalysed reaction is glycerol + ATP = sn-glycerol 3-phosphate + ADP + H(+). The protein operates within polyol metabolism; glycerol degradation via glycerol kinase pathway; sn-glycerol 3-phosphate from glycerol: step 1/1. With respect to regulation, activated by phosphorylation and inhibited by fructose 1,6-bisphosphate (FBP). In terms of biological role, key enzyme in the regulation of glycerol uptake and metabolism. Catalyzes the phosphorylation of glycerol to yield sn-glycerol 3-phosphate. The protein is Glycerol kinase of Bacillus subtilis (strain 168).